A 66-amino-acid polypeptide reads, in one-letter code: Neurotoxin Cex11 (66 aa).

In terms of domain architecture, LCN-type CS-alpha/beta spans 1 to 64 (KEGYPVNIYT…SYPYPEKSCG (64 aa)). 4 disulfides stabilise this stretch: Cys-12–Cys-63, Cys-16–Cys-39, Cys-25–Cys-44, and Cys-29–Cys-46. Position 63 is a cysteine amide (Cys-63). Residues 64–66 (GRK) constitute a propeptide that is removed on maturation.

This sequence belongs to the long (4 C-C) scorpion toxin superfamily. Sodium channel inhibitor family. Beta subfamily. Expressed by the venom gland.

It is found in the secreted. Beta toxins bind voltage-independently at site-4 of sodium channels (Nav) and shift the voltage of activation toward more negative potentials thereby affecting sodium channel activation and promoting spontaneous and repetitive firing. In Centruroides exilicauda (Bark scorpion), this protein is Neurotoxin Cex11.